The sequence spans 143 residues: Ribosome maturation factor RimP (143 aa).

The protein belongs to the RimP family.

It is found in the cytoplasm. Its function is as follows. Required for maturation of 30S ribosomal subunits. This is Ribosome maturation factor RimP from Neisseria meningitidis serogroup C (strain 053442).